We begin with the raw amino-acid sequence, 434 residues long: MISSNGLFDRAKKVIPGGVNSPVRAFRAVDLNPLFISRAKGSKLYDVEEREYIDYVCSWGPMILGHSNDLILKNVENVLHNGLSFGAPVETEVQIAEMIVSMVPGVEMVRMVNSGTEAVMSAIRLARGFTKRDKIIKFEGCYHGHSDSMLVKAGSGVLTAGIPDSLGVPQNAAGDTLTAVYNNISSVEQLFQENKNHIAAVIIEPVAANMGVIPPQEGFLKELSGICRQNSALLIFDEVITGFRLAAGGAQEYFGVEADIVTFGKIIGGGMPVGAYAGRKEIMEHVAPCGGVYQAGTLSGNPVAMAAGLAQLEILKSKPEIYEDINKKAEFLGNGFEKIVQKYKAPITLNRVGSLLCGFFSQNPVTNYQEAKLSNTNYYAAYFKSMLNKGIYLAPSQFEAMFVSSAHTYEDIDATLKAAEETLVENISLMEELI.

An N6-(pyridoxal phosphate)lysine modification is found at Lys265.

It belongs to the class-III pyridoxal-phosphate-dependent aminotransferase family. HemL subfamily. As to quaternary structure, homodimer. The cofactor is pyridoxal 5'-phosphate.

It is found in the cytoplasm. It carries out the reaction (S)-4-amino-5-oxopentanoate = 5-aminolevulinate. The protein operates within porphyrin-containing compound metabolism; protoporphyrin-IX biosynthesis; 5-aminolevulinate from L-glutamyl-tRNA(Glu): step 2/2. This Ruminiclostridium cellulolyticum (strain ATCC 35319 / DSM 5812 / JCM 6584 / H10) (Clostridium cellulolyticum) protein is Glutamate-1-semialdehyde 2,1-aminomutase.